The chain runs to 482 residues: Hydrogenase transcriptional regulatory protein HoxA (482 aa).

The Response regulatory domain maps to 7–121 (TVLVVDDETR…HLIDTVRQAV (115 aa)). The residue at position 55 (D55) is a 4-aspartylphosphate. Positions 167–394 (APGSPLDAVC…LRNEIYRAVA (228 aa)) constitute a Sigma-54 factor interaction domain. ATP contacts are provided by residues 193 to 200 (GESGTGKE) and 265 to 274 (EIGDTSPAFQ). Positions 456–475 (KTHAAKELGLSRVGLRQKLL) form a DNA-binding region, H-T-H motif.

The protein resides in the cytoplasm. Probable member of the two-component regulatory system involved in the regulation of the hydrogenase activity. HoxA is probably phosphorylated by a sensory component (which could be HoxX) and then acts in conjunction with sigma-54 as a transcriptional activator. The protein is Hydrogenase transcriptional regulatory protein HoxA (hoxA) of Cupriavidus necator (strain ATCC 17699 / DSM 428 / KCTC 22496 / NCIMB 10442 / H16 / Stanier 337) (Ralstonia eutropha).